The chain runs to 664 residues: MGRIVGIDLGTTNSVVAVLEAGRPQVIANAEGSRTTPSVVGYSKEAELLVGQLARRQLVLNPRNTFANLKRFVGRGWDEMDDSSLSVPYTVRANEQGNVRVSCQVTEREYAPEELVASIIRKLVDDAATYLGEPVEAAVVTVPAYFNDAQRQATRDAGRLAGITVERILNEPTAAALAYGFDRSAARRVLVFDLGGGTFDVSLMRVANGVFDVKATCGDTQLGGNDFDQRIVDWLAEAFKTKHGLDLRRDRQALQRLIEAAEKAKQELSGVLSTPISLPFIATGPDGPLHIETSLDRPTFEGLCPDLLDRLLNPVQTALRDSGWSADDVDDVVLVGGGTRMPMVQQLLRTLVASEPCQSVNPDEVVAVGGAVQAGILTGELRDLMLNDVTPLSLGLETVGGLMKVLIPRNTPIPVRQSDVFSTSEANQSSVEIHVWQGERQLAADNKSLGRFRLSGIPPAPRGVPQVQVAFDIDANGLLQVSATDRTTGRKQSVNIQGGSTLNEEELQALLAEAEAKAGEDRRRRASIDRRNSALTLVGQAERRLRDAALELGPYGAERQQRAVETAMRDVQDLLEQNDLQELELAVASLQEALFGLNRRISSERRTDANPLQGIRNTLGSLKDELFSDDDWDEDPWNSPARSSDGRRIYRGRELNPWDDDFYR.

Position 198 is a phosphothreonine; by autocatalysis (Thr198).

Belongs to the heat shock protein 70 family.

Its function is as follows. Acts as a chaperone. This chain is Chaperone protein dnaK1 (dnaK1), found in Prochlorococcus marinus (strain MIT 9313).